The sequence spans 371 residues: Geranylgeranyl transferase type-2 subunit alpha (371 aa).

PFTA repeat units lie at residues 45–79, 92–126, 131–165, 177–211, and 242–276; these read YSDE…NNYS, ILNQ…ELVK, NWKY…NMEL, INLD…KIYN, and LLKN…DDLF.

The protein belongs to the protein prenyltransferase subunit alpha family. As to quaternary structure, heterodimer of an alpha and a beta subunit.

It catalyses the reaction geranylgeranyl diphosphate + L-cysteinyl-[protein] = S-geranylgeranyl-L-cysteinyl-[protein] + diphosphate. Functionally, catalyzes the transfer of a geranyl-geranyl moiety from geranyl-geranyl pyrophosphate to proteins having the C-terminal -XCC or -XCXC, where both cysteines may become modified. Acts on YPT1 and SEC4. In Candida albicans (Yeast), this protein is Geranylgeranyl transferase type-2 subunit alpha (BET4).